The primary structure comprises 1333 residues: MHSTTNNSNKRNNEEKHKQPEANGSADNGEGASGTRNQTAGDTTPEAGTRNETEAGAGARGQTDGASRSGTNAKVATASSARQMDMEKAAETTSTIENVNDVGIMQQKKPPTVIQSRTDVFNEQFANEALHPTTKVIFNGLDVNTEVQPLSDDFEQISDPKGYLTYSVKYEDQFAKKDKLRASEADDRIVGPTVNLFKYGSAVVNIDLNQDFFDTTTGINLTKGILLVQDLLVPIGVTAGAEQSSEYVSGLLMVLFKVMTDNRLVIVGETTTPISNTLSTVVNNILRTTYHNNVGINPALLRDFTHVNWLNQDITNMLQQAGTRFGLGLTATRLDYVRLVKTIVGYALDIDHFAASVLNINLRALMEANVTADDRIKALQAHSMISTQFHGPNQGALRPELAFDHDHVIRCLMLAAANYPRLEGIIVQINTGYVASTNVIRPVSEKRYFPENLEQNQSAARLVSAVKARASEADISSIHLAIAREVSPMFNVHELKKIAESFEDPSSIVVVLEFILFSLFFPTEFNRIKGDIQNVLLLFFSRWYPVEYGIFIQRGATYTINAAGEFEFSGRNEKWDQSSYLSEHFPALFSDVPLAGANTIIAIMRLFTPQGFLRTDDLAIAANFPRASRNPQTYIPYTNQRGTVTNEFASRFRTIVATLANVVNERAVQDDMQKATRSCTKQWLRHLETQFDNIAVAHTDHLSVVYATMSNFMLNFTNNFSGNHATFKPEQYVITSPEGSYKPIMERQGETVDGLTIIDTSIVWPILCQCTYPLVRQSGKGVDAVSIMEEIVYPDPGTTLSQSLSVAQILSKLTLPDAFINMILSGGDSVAMRTYQTEANDELDEGIRMTTYDQYLSHIRERLHITNVPDPIYITGASTPDQIAASVQATHVAVVLYQNGVINGPASTYLRENEVLVVMPDYSNVAARFVYANAQMNNNRYHESVLEIADIFDQADFIQTDNAVRRLRALMPTLSTSQIRHAIERIAQITNVDSTDYGKLTLRFLGTLTRPLKMQNAQIRRIRPDGTVLRYDDQIDIEAFRWSRYFLDELQLRRLAVGLRLIANPRIARRFNGVRIMYLTDDDPDPDFVPAIPEGYVAVQYAHRLFSSSLANKRNRVTYTHPPTGMAYPSPTGRPHVHLTINERAGMSKLVADNIIASVIKSNWVVDILDIEYTAEVMTPSEGYTQHVDAESIMTAPKGKLFHLQFMDGLLRPEPSAFDPPASGEDIRLIYPLQPISVARSMRAIVNHNEVDRPRGAVAPSSYEMDTGTLSRNGDLLYSPVENGQAGIPKLEVDHISFSNVVSMMTSNIRTGDDMAVERVNPSDIRAINIRNA.

Residues 1-10 (MHSTTNNSNK) show a composition bias toward polar residues. A disordered region spans residues 1-93 (MHSTTNNSNK…MDMEKAAETT (93 aa)). The span at 11–20 (RNNEEKHKQP) shows a compositional bias: basic and acidic residues. Positions 64–82 (DGASRSGTNAKVATASSAR) are enriched in polar residues.

This sequence belongs to the turreted BTV-fold inner capsid family. Homodecamer; each decamer is made up of two conformers of VP2, called VP2A and VP2B. 12 homodecamers assemble to form an icosahedral capsid.

The protein localises to the virion. Functionally, inner capsid protein that self-assembles to form an icosahedral capsid with a T=2 symmetry, which consists of 120 copies of VP2, with channels at each of its five-fold vertices. This capsid constitutes the innermost concentric layer of the viral mature particle. This is Inner capsid protein VP1 (S1) from Lymantria dispar cypovirus 1 (isolate Rao) (LdCPV-1).